Reading from the N-terminus, the 233-residue chain is Orotidine 5'-phosphate decarboxylase (233 aa).

Substrate-binding positions include Asp11, Lys34, 61-70 (DLKLHDIPNT), Thr117, Arg179, Gln189, Gly209, and Arg210. The Proton donor role is filled by Lys63.

This sequence belongs to the OMP decarboxylase family. Type 1 subfamily. As to quaternary structure, homodimer.

It carries out the reaction orotidine 5'-phosphate + H(+) = UMP + CO2. Its pathway is pyrimidine metabolism; UMP biosynthesis via de novo pathway; UMP from orotate: step 2/2. Functionally, catalyzes the decarboxylation of orotidine 5'-monophosphate (OMP) to uridine 5'-monophosphate (UMP). The polypeptide is Orotidine 5'-phosphate decarboxylase (Streptococcus agalactiae serotype Ia (strain ATCC 27591 / A909 / CDC SS700)).